A 423-amino-acid polypeptide reads, in one-letter code: Glutamate-1-semialdehyde 2,1-aminomutase (423 aa).

Position 266 is an N6-(pyridoxal phosphate)lysine (Lys-266).

Belongs to the class-III pyridoxal-phosphate-dependent aminotransferase family. HemL subfamily. As to quaternary structure, homodimer. It depends on pyridoxal 5'-phosphate as a cofactor.

It localises to the cytoplasm. It catalyses the reaction (S)-4-amino-5-oxopentanoate = 5-aminolevulinate. It participates in porphyrin-containing compound metabolism; protoporphyrin-IX biosynthesis; 5-aminolevulinate from L-glutamyl-tRNA(Glu): step 2/2. This Desulfovibrio desulfuricans (strain ATCC 27774 / DSM 6949 / MB) protein is Glutamate-1-semialdehyde 2,1-aminomutase.